A 301-amino-acid polypeptide reads, in one-letter code: uncharacterized protein (301 aa).

The protein belongs to the asfivirus E301R family. In terms of assembly, interacts with host IRF3.

Its function is as follows. Plays a role in the inhibition of host innate immune system by acting as a negatively regulator of type I interferon production. Mechanistically, interacts with and prevents host IRF3 nuclear localization to inhibit its transcriptional activity. This is an uncharacterized protein from African swine fever virus (strain Badajoz 1971 Vero-adapted) (Ba71V).